Consider the following 185-residue polypeptide: Threonylcarbamoyl-AMP synthase (185 aa).

One can recognise a YrdC-like domain in the interval 4–185; that stretch reads SWRVQQAARE…LATGEIVRPG (182 aa).

Belongs to the SUA5 family. TsaC subfamily.

It is found in the cytoplasm. It catalyses the reaction L-threonine + hydrogencarbonate + ATP = L-threonylcarbamoyladenylate + diphosphate + H2O. Required for the formation of a threonylcarbamoyl group on adenosine at position 37 (t(6)A37) in tRNAs that read codons beginning with adenine. Catalyzes the conversion of L-threonine, HCO(3)(-)/CO(2) and ATP to give threonylcarbamoyl-AMP (TC-AMP) as the acyladenylate intermediate, with the release of diphosphate. The sequence is that of Threonylcarbamoyl-AMP synthase from Pseudomonas putida (strain W619).